Reading from the N-terminus, the 310-residue chain is MTKEQAPRASGEKEEGCPPEYIVFDEERGEYICTLTGEVVEETVIDTGPEWRAYTPEERTRRSRVGSPLTHTLPDYGILTTISGYRDANGRKLEARLRIEASRLRRLQAKLRATTSIEKNIEQAAREITRLVEALNLPRGIIDTAMMIYRQAAEKGLVRGRSLESMAAAAVYAACRIRGIPRSIDDIAEVVKGGRKEVARCYRLIVRELKLRMPIVDPVRYVSRIVSALRLSPAVERRAAEILVQARKMGLTAGKDPAGLAAAAIYIAALELGERRTQKEIAAAAGVTEVTVRNRYKELVQKLNIPLPAQ.

2 repeat units span residues 126–209 (REIT…VREL) and 220–301 (RYVS…ELVQ).

The protein belongs to the TFIIB family.

In terms of biological role, stabilizes TBP binding to an archaeal box-A promoter. Also responsible for recruiting RNA polymerase II to the pre-initiation complex (DNA-TBP-TFIIB). The sequence is that of Transcription initiation factor IIB from Pyrodictium occultum.